A 702-amino-acid polypeptide reads, in one-letter code: Polyribonucleotide nucleotidyltransferase (702 aa).

Positions 484 and 490 each coordinate Mg(2+). The region spanning 551–610 is the KH domain; the sequence is PHIESFKIAVEKIGALIGPGGKTVKSLSDQYRVTINTDSDGTVTVSGRDAQSVFDAKVAV. Residues 620-688 enclose the S1 motif domain; it reads GRVYQGVVKR…RMGRLNLSYI (69 aa).

The protein belongs to the polyribonucleotide nucleotidyltransferase family. The cofactor is Mg(2+).

It is found in the cytoplasm. It carries out the reaction RNA(n+1) + phosphate = RNA(n) + a ribonucleoside 5'-diphosphate. Involved in mRNA degradation. Catalyzes the phosphorolysis of single-stranded polyribonucleotides processively in the 3'- to 5'-direction. This Treponema pallidum (strain Nichols) protein is Polyribonucleotide nucleotidyltransferase.